A 447-amino-acid chain; its full sequence is Probable protein phosphatase 2C 71 (447 aa).

A PPM-type phosphatase domain is found at 33–279 (SYGYASSAGK…DNITCVVVRF (247 aa)). Residues aspartate 69, glycine 70, aspartate 231, and aspartate 270 each contribute to the Mn(2+) site. The segment covering 284-297 (SANNNGSSSSEEAN) has biased composition (low complexity). Residues 284–447 (SANNNGSSSS…ARKTTPSIFN (164 aa)) are disordered. Residues 305–331 (NDSDHKISAKETNQDHTTVNKDLDRNT) are compositionally biased toward basic and acidic residues. 2 stretches are compositionally biased toward polar residues: residues 346–374 (ADNS…TGEK) and 392–423 (KVPN…GSTG). A compositionally biased stretch (basic and acidic residues) spans 424-438 (ERNRKPIKVHSDSAA).

It belongs to the PP2C family. Requires Mg(2+) as cofactor. Mn(2+) serves as cofactor.

It catalyses the reaction O-phospho-L-seryl-[protein] + H2O = L-seryl-[protein] + phosphate. It carries out the reaction O-phospho-L-threonyl-[protein] + H2O = L-threonyl-[protein] + phosphate. The sequence is that of Probable protein phosphatase 2C 71 from Arabidopsis thaliana (Mouse-ear cress).